The sequence spans 259 residues: UPF0246 protein PA14_18590 (259 aa).

It belongs to the UPF0246 family.

The chain is UPF0246 protein PA14_18590 from Pseudomonas aeruginosa (strain UCBPP-PA14).